The primary structure comprises 60 residues: Large ribosomal subunit protein uL30 (60 aa).

It belongs to the universal ribosomal protein uL30 family. Part of the 50S ribosomal subunit.

This is Large ribosomal subunit protein uL30 from Alcanivorax borkumensis (strain ATCC 700651 / DSM 11573 / NCIMB 13689 / SK2).